Reading from the N-terminus, the 312-residue chain is Protein-methionine-sulfoxide reductase catalytic subunit MsrP (312 aa).

Positions methionine 1 to alanine 42 form a signal peptide, tat-type signal. Mo-molybdopterin contacts are provided by residues asparagine 68, tyrosine 71–glutamate 72, cysteine 126, serine 161, asparagine 211, arginine 216, and glycine 227–lysine 229.

It belongs to the MsrP family. As to quaternary structure, heterodimer of a catalytic subunit (MsrP) and a heme-binding subunit (MsrQ). It depends on Mo-molybdopterin as a cofactor. Predicted to be exported by the Tat system. The position of the signal peptide cleavage has not been experimentally proven.

Its subcellular location is the periplasm. It carries out the reaction L-methionyl-[protein] + a quinone + H2O = L-methionyl-(S)-S-oxide-[protein] + a quinol. The catalysed reaction is L-methionyl-[protein] + a quinone + H2O = L-methionyl-(R)-S-oxide-[protein] + a quinol. Part of the MsrPQ system that repairs oxidized periplasmic proteins containing methionine sulfoxide residues (Met-O), using respiratory chain electrons. Thus protects these proteins from oxidative-stress damage caused by reactive species of oxygen and chlorine generated by the host defense mechanisms. MsrPQ is essential for the maintenance of envelope integrity under bleach stress, rescuing a wide series of structurally unrelated periplasmic proteins from methionine oxidation. The catalytic subunit MsrP is non-stereospecific, being able to reduce both (R-) and (S-) diastereoisomers of methionine sulfoxide. The protein is Protein-methionine-sulfoxide reductase catalytic subunit MsrP of Gluconobacter oxydans (strain 621H) (Gluconobacter suboxydans).